The chain runs to 340 residues: Alcohol dehydrogenase (340 aa).

The Zn(2+) site is built by cysteine 37, histidine 58, cysteine 89, cysteine 92, cysteine 95, cysteine 103, and cysteine 145.

It belongs to the zinc-containing alcohol dehydrogenase family. It depends on Zn(2+) as a cofactor.

It catalyses the reaction a primary alcohol + NAD(+) = an aldehyde + NADH + H(+). The enzyme catalyses a secondary alcohol + NAD(+) = a ketone + NADH + H(+). This Staphylococcus epidermidis (strain ATCC 12228 / FDA PCI 1200) protein is Alcohol dehydrogenase (adh).